Consider the following 428-residue polypeptide: Histidine--tRNA ligase (428 aa).

Belongs to the class-II aminoacyl-tRNA synthetase family. As to quaternary structure, homodimer.

It is found in the cytoplasm. It catalyses the reaction tRNA(His) + L-histidine + ATP = L-histidyl-tRNA(His) + AMP + diphosphate + H(+). The protein is Histidine--tRNA ligase of Lactobacillus gasseri (strain ATCC 33323 / DSM 20243 / BCRC 14619 / CIP 102991 / JCM 1131 / KCTC 3163 / NCIMB 11718 / NCTC 13722 / AM63).